The primary structure comprises 386 residues: MNPQIRNPMERMYRDTFYDNFENEPILYGRSYTWLCYEVKIKRGRSNLLWDTGVFRGPVLPKRQSNHRQEVYFRFENHAEMCFLSWFCGNRLPANRRFQITWFVSWNPCLPCVVKVTKFLAEHPNVTLTISAARLYYYRDRDWRWVLLRLHKAGARVKIMDYEDFAYCWENFVCNEGQPFMPWYKFDDNYASLHRTLKEILRNPMEAMYPHIFYFHFKNLLKACGRNESWLCFTMEVTKHHSAVFRKRGVFRNQVDPETHCHAERCFLSWFCDDILSPNTNYEVTWYTSWSPCPECAGEVAEFLARHSNVNLTIFTARLCYFWDTDYQEGLCSLSQEGASVKIMGYKDFVSCWKNFVYSDDEPFKPWKGLQTNFRLLKRRLREILQ.

CMP/dCMP-type deaminase domains are found at residues 29–145 (GRSY…DWRW) and 187–334 (DDNY…LCSL). Positions 78, 109, 112, and 262 each coordinate Zn(2+). Catalysis depends on E264, which acts as the Proton donor. Residues C293 and C296 each coordinate Zn(2+).

Belongs to the cytidine and deoxycytidylate deaminase family. As to quaternary structure, can form homo- and heterodimers with APOBEC3F and APOBEC3G. Interacts with L1RE1; this interaction inhibits LINE-1 retrotransposition. (Microbial infection) Interacts with HIV-1 Vif. This interaction triggers APOBEC3D polyubiquitylation and degradation by the 26S proteasome. The cofactor is Zn(2+). In terms of tissue distribution, expressed in lymphoid organs. Also detected in non-lymphoid tissues including lung.

It is found in the cytoplasm. It localises to the P-body. It catalyses the reaction a 2'-deoxycytidine in single-stranded DNA + H2O + H(+) = a 2'-deoxyuridine in single-stranded DNA + NH4(+). Its activity is regulated as follows. (Microbial infection) Antiviral activity is neutralized by the HIV-1 virion infectivity factor (Vif), that prevents its incorporation into progeny virions by both inhibiting its translation and/or by inducing its ubiquitination and subsequent degradation by the 26S proteasome. Its function is as follows. DNA deaminase (cytidine deaminase) which acts as an inhibitor of retrovirus replication and retrotransposon mobility via deaminase-dependent and -independent mechanisms. Exhibits antiviral activity against HIV-1. After the penetration of retroviral nucleocapsids into target cells of infection and the initiation of reverse transcription, it can induce the conversion of cytosine to uracil in the minus-sense single-strand viral DNA, leading to G-to-A hypermutations in the subsequent plus-strand viral DNA. The resultant detrimental levels of mutations in the proviral genome, along with a deamination-independent mechanism that works prior to the proviral integration, together exert efficient antiretroviral effects in infected target cells. Selectively targets single-stranded DNA and does not deaminate double-stranded DNA or single- or double-stranded RNA. Also inhibits the mobility of LTR and non-LTR retrotransposons. Functionally, (Microbial infection) Enhances hepatitis B virus/HBV replication by excluding restriction factors APOBEC3F and APOBEC3G from HBV capsids. The protein is DNA dC-&gt;dU-editing enzyme APOBEC-3D of Homo sapiens (Human).